Reading from the N-terminus, the 309-residue chain is Olfactory receptor-like protein OLF4 (309 aa).

Topologically, residues 1-25 (MELENDTRIPEFLLLGFSEEPKLQP) are extracellular. A glycan (N-linked (GlcNAc...) asparagine) is linked at N5. A helical membrane pass occupies residues 26–49 (FLFGLFLSMYLVTILGNLLLILAV). Residues 50 to 57 (SSDSHLHT) are Cytoplasmic-facing. A helical membrane pass occupies residues 58-79 (PMYFFLANLSFVDICFTCTTIP). Residues 80–100 (KMLVNIQTQRKVITYESCIIQ) lie on the Extracellular side of the membrane. The helical transmembrane segment at 101–120 (MYFFELFAGIDNFLLTVMAY) threads the bilayer. Topologically, residues 121–139 (DRYMAICYPLHYMVIMNPQ) are cytoplasmic. Residues 140 to 158 (LCSLLLLVSWIMSALHSLL) traverse the membrane as a helical segment. Residues 159 to 196 (QTLMVLRLSFCTHFQIPHFFCELNQMIQLACSDTFLNN) are Extracellular-facing. The helical transmembrane segment at 197–219 (MMLYFAAILLGVAPLVGVLYSYF) threads the bilayer. Residues 220–236 (KIVSSIRGISSAHSKYK) are Cytoplasmic-facing. A helical membrane pass occupies residues 237–260 (AFSTCASHLSVVSLFYCTSLGVYL). At 261–272 (SSAAPQSTHTSS) the chain is on the extracellular side. A helical membrane pass occupies residues 273–292 (VASVMYTVVTPMLNPFIYSL). At 293–309 (RNKDIKGALNVFFRGKP) the chain is on the cytoplasmic side.

This sequence belongs to the G-protein coupled receptor 1 family.

The protein resides in the cell membrane. Functionally, putative odorant or sperm cell receptor. This chain is Olfactory receptor-like protein OLF4, found in Canis lupus familiaris (Dog).